The primary structure comprises 397 residues: B3 domain-containing protein At4g34400 (397 aa).

Residues 14–107 (PRFFTVFVSH…IFEVSIFRGY (94 aa)) constitute a DNA-binding region (TF-B3). The disordered stretch occupies residues 118-255 (ELEEEEEDSV…SSYAPDKEDT (138 aa)). The segment covering 137–160 (TGAKSEMKNTVPEGRDKGKSKVEV) has biased composition (basic and acidic residues). 3 stretches are compositionally biased toward acidic residues: residues 161-186 (VEDSDDDEEEDSVYSESSEETETDTD), 212-227 (SSDDEEDEEEDSDSDY), and 235-246 (DIEENSISEEDS).

Its subcellular location is the nucleus. The sequence is that of B3 domain-containing protein At4g34400 from Arabidopsis thaliana (Mouse-ear cress).